The sequence spans 398 residues: S-adenosylmethionine synthase (398 aa).

His-26 serves as a coordination point for ATP. A Mg(2+)-binding site is contributed by Asp-28. Residue Glu-54 coordinates K(+). The L-methionine site is built by Glu-67 and Gln-110. The tract at residues 110-120 (QSPDIAQGVNE) is flexible loop. Residues 177–179 (DAK), 243–244 (RF), Asp-252, 258–259 (RK), Ala-275, and Lys-279 contribute to the ATP site. Position 252 (Asp-252) interacts with L-methionine. Residue Lys-283 participates in L-methionine binding.

It belongs to the AdoMet synthase family. In terms of assembly, homotetramer; dimer of dimers. The cofactor is Mg(2+). K(+) serves as cofactor.

The protein localises to the cytoplasm. The enzyme catalyses L-methionine + ATP + H2O = S-adenosyl-L-methionine + phosphate + diphosphate. The protein operates within amino-acid biosynthesis; S-adenosyl-L-methionine biosynthesis; S-adenosyl-L-methionine from L-methionine: step 1/1. Its function is as follows. Catalyzes the formation of S-adenosylmethionine (AdoMet) from methionine and ATP. The overall synthetic reaction is composed of two sequential steps, AdoMet formation and the subsequent tripolyphosphate hydrolysis which occurs prior to release of AdoMet from the enzyme. The sequence is that of S-adenosylmethionine synthase from Desulfotalea psychrophila (strain LSv54 / DSM 12343).